A 699-amino-acid chain; its full sequence is tRNA wybutosine-synthesizing protein 4 (699 aa).

S-adenosyl-L-methionine-binding positions include R94, G120, D151, 197–198 (DL), and E224.

Belongs to the methyltransferase superfamily. LCMT family.

The catalysed reaction is 7-[(3S)-3-amino-3-carboxypropyl]wyosine(37) in tRNA(Phe) + S-adenosyl-L-methionine = 7-[(3S)-(3-amino-3-methoxycarbonyl)propyl]wyosine(37) in tRNA(Phe) + S-adenosyl-L-homocysteine. It carries out the reaction 7-[(3S)-(3-amino-3-methoxycarbonyl)propyl]wyosine(37) in tRNA(Phe) + S-adenosyl-L-methionine + CO2 = wybutosine(37) in tRNA(Phe) + S-adenosyl-L-homocysteine + 2 H(+). It participates in tRNA modification; wybutosine-tRNA(Phe) biosynthesis. Probable S-adenosyl-L-methionine-dependent methyltransferase that acts as a component of the wybutosine biosynthesis pathway. Wybutosine is a hyper modified guanosine with a tricyclic base found at the 3'-position adjacent to the anticodon of eukaryotic phenylalanine tRNA. May methylate the carboxyl group of leucine residues to form alpha-leucine ester residues. The polypeptide is tRNA wybutosine-synthesizing protein 4 (PPM2) (Eremothecium gossypii (strain ATCC 10895 / CBS 109.51 / FGSC 9923 / NRRL Y-1056) (Yeast)).